The following is a 432-amino-acid chain: Probable anion transporter 5 (432 aa).

The first 23 residues, methionine 1–cysteine 23, serve as a signal peptide directing secretion. Transmembrane regions (helical) follow at residues threonine 50–alanine 70, valine 78–asparagine 98, glycine 101–isoleucine 121, isoleucine 140–valine 160, glycine 164–isoleucine 184, leucine 229–methionine 249, valine 273–isoleucine 293, lysine 305–phenylalanine 325, valine 331–valine 351, tyrosine 360–valine 380, and valine 405–serine 425.

The protein belongs to the major facilitator superfamily. Sodium/anion cotransporter (TC 2.A.1.14) family. Ubiquitous.

The protein resides in the golgi apparatus membrane. Its function is as follows. Inorganic phosphate and probable anion transporter. The sequence is that of Probable anion transporter 5 (ANTR5) from Arabidopsis thaliana (Mouse-ear cress).